Reading from the N-terminus, the 3103-residue chain is Extracellular matrix protein 3 (3103 aa).

Residues 1-19 (MASALLCFLAAILPGMIAA) form the signal peptide. The Extracellular segment spans residues 20 to 3047 (QNTWVLGTSD…TYELAPKGTN (3028 aa)). 12 CSPG repeats span residues 289 to 388 (PPSL…LEIV), 411 to 499 (APVV…FRMT), 520 to 630 (APIV…FRVV), 656 to 762 (PPEM…FVVQ), 784 to 875 (QPPT…LEIT), 901 to 993 (LPPG…LTLS), 1022 to 1124 (APNV…FRCT), 1145 to 1238 (EEPQ…VLLT), 1259 to 1357 (TPRL…FDIT), 1378 to 1470 (VHPS…FQVT), 1490 to 1579 (KEPV…FIVT), and 1613 to 1710 (APQI…VEVR). N-linked (GlcNAc...) asparagine glycans are attached at residues N330 and N453. 7 N-linked (GlcNAc...) asparagine glycosylation sites follow: N989, N1024, N1042, N1207, N1294, N1321, and N1327. 5 N-linked (GlcNAc...) asparagine glycosylation sites follow: N1542, N1674, N1679, N1725, and N1739. 4 consecutive Calx-beta domains span residues 1717 to 1816 (LPNQ…IILH), 1829 to 1942 (AVVT…VKLS), 1956 to 2062 (NVII…LVLN), and 2077 to 2179 (ITIN…LVLG). N-linked (GlcNAc...) asparagine glycosylation is found at N2080, N2195, N2274, N2385, and N2932. Residues 2197–2302 (TVVTVHDVGD…MREAFTLHIT (106 aa)) enclose the Calx-beta 5 domain. The segment at 2983–3013 (SSGIGKRETEHHAISSRQRRQANSEALVDPA) is disordered. A helical transmembrane segment spans residues 3048-3068 (VVMIAVVIGVILIILLVALVI). Residues 3069 to 3103 (GVVVRRRQAKQQPVVVVNGSAKVVSNVHFDDNTEV) lie on the Cytoplasmic side of the membrane.

It belongs to the FRAS1 family. Component of extracellular matrix fibers that interact with PMC filopodia during gastrulation (at protein level).

Its subcellular location is the cell membrane. In terms of biological role, extracellular matrix protein that may serve as substrate for the migratory primary mesenchyme cells (PMCs), the interaction possibly providing guidance information to migrating PMCs. This Lytechinus variegatus (Green sea urchin) protein is Extracellular matrix protein 3 (ECM3).